Here is a 280-residue protein sequence, read N- to C-terminus: Fructose-1,6-bisphosphatase class 1 (280 aa).

Mg(2+)-binding residues include Glu-64, Asp-83, Leu-85, and Asp-86. Substrate is bound by residues 86–89 (DGSS), Tyr-189, and Lys-220. Mg(2+) is bound at residue Glu-226.

It belongs to the FBPase class 1 family. In terms of assembly, homotetramer. It depends on Mg(2+) as a cofactor.

The protein resides in the cytoplasm. It catalyses the reaction beta-D-fructose 1,6-bisphosphate + H2O = beta-D-fructose 6-phosphate + phosphate. Its pathway is carbohydrate biosynthesis; gluconeogenesis. The polypeptide is Fructose-1,6-bisphosphatase class 1 (Campylobacter jejuni subsp. doylei (strain ATCC BAA-1458 / RM4099 / 269.97)).